The sequence spans 305 residues: Sulfate adenylyltransferase subunit 2 (305 aa).

It belongs to the PAPS reductase family. CysD subfamily. As to quaternary structure, heterodimer composed of CysD, the smaller subunit, and CysN.

It carries out the reaction sulfate + ATP + H(+) = adenosine 5'-phosphosulfate + diphosphate. The protein operates within sulfur metabolism; hydrogen sulfide biosynthesis; sulfite from sulfate: step 1/3. Functionally, with CysN forms the ATP sulfurylase (ATPS) that catalyzes the adenylation of sulfate producing adenosine 5'-phosphosulfate (APS) and diphosphate, the first enzymatic step in sulfur assimilation pathway. APS synthesis involves the formation of a high-energy phosphoric-sulfuric acid anhydride bond driven by GTP hydrolysis by CysN coupled to ATP hydrolysis by CysD. This chain is Sulfate adenylyltransferase subunit 2, found in Pseudomonas syringae pv. tomato (strain ATCC BAA-871 / DC3000).